The sequence spans 180 residues: Large ribosomal subunit protein uL5 (180 aa).

The protein belongs to the universal ribosomal protein uL5 family. In terms of assembly, part of the 50S ribosomal subunit; part of the 5S rRNA/L5/L18/L25 subcomplex. Contacts the 5S rRNA and the P site tRNA. Forms a bridge to the 30S subunit in the 70S ribosome.

Functionally, this is one of the proteins that bind and probably mediate the attachment of the 5S RNA into the large ribosomal subunit, where it forms part of the central protuberance. In the 70S ribosome it contacts protein S13 of the 30S subunit (bridge B1b), connecting the 2 subunits; this bridge is implicated in subunit movement. Contacts the P site tRNA; the 5S rRNA and some of its associated proteins might help stabilize positioning of ribosome-bound tRNAs. The protein is Large ribosomal subunit protein uL5 of Oenococcus oeni (strain ATCC BAA-331 / PSU-1).